An 87-amino-acid chain; its full sequence is uncharacterized protein (87 aa).

Residues 4-87 (SIIEITNIKK…KPKGNITIKI (84 aa)) enclose the 2Fe-2S ferredoxin-type domain. Cys38, Cys43, Cys46, and Cys75 together coordinate [2Fe-2S] cluster.

It depends on [2Fe-2S] cluster as a cofactor.

This is an uncharacterized protein from Buchnera aphidicola subsp. Acyrthosiphon pisum (strain APS) (Acyrthosiphon pisum symbiotic bacterium).